Here is a 416-residue protein sequence, read N- to C-terminus: MDGSMNLGNEPPGDGGGGGGLTRQGSIYSLTFDEFQSSVGKDFGSMNMDELLKNIWSAEETQAMASGVVPVLGGGQEGLQLQRQGSLTLPRTLSQKTVDQVWKDLSKVGSSGVGGSNLSQVAQAQSQSQSQRQQTLGEVTLEEFLVRAGVVREEAQVAARAQIAENNKGGYFGNDANTGFSVEFQQPSPRVVAAGVMGNLGAETANSLQVQGSSLPLNVNGARTTYQQSQQQQPIMPKQPGFGYGTQMGQLNSPGIRGGGLVGLGDQSLTNNVGFVQGASAAIPGALGVGAVSPVTPLSSEGIGKSNGDSSSLSPSPYMFNGGVRGRKSGTVEKVVERRQRRMIKNRESAARSRARKQAYTVELEAEVAKLKEENDELQRKQARIMEMQKNQETEMRNLLQGGPKKKLRRTESGPW.

The segment at 1-23 (MDGSMNLGNEPPGDGGGGGGLTR) is disordered. Over residues 13–22 (GDGGGGGGLT) the composition is skewed to gly residues. Phosphoserine occurs at positions 26, 45, and 86. Residue threonine 135 is modified to Phosphothreonine. A disordered region spans residues 300–326 (SEGIGKSNGDSSSLSPSPYMFNGGVRG). A bZIP domain is found at 336–399 (VERRQRRMIK…KNQETEMRNL (64 aa)). A basic motif region spans residues 338-357 (RRQRRMIKNRESAARSRARK). Residues 364–385 (LEAEVAKLKEENDELQRKQARI) form a leucine-zipper region. The interval 388-416 (MQKNQETEMRNLLQGGPKKKLRRTESGPW) is disordered.

This sequence belongs to the bZIP family. ABI5 subfamily. As to quaternary structure, DNA-binding heterodimer. Interacts with ARIA. The activation by phosphorylation is induced by abscisic acid (ABA). Phosphorylated by SRK2C, SRK2D, SRK2E, SRK2F and SRK2I in vitro. Expressed in roots, leaves, flowers and siliques but not in seeds.

It localises to the nucleus. Functionally, involved in ABA and stress responses and acts as a positive component of glucose signal transduction. Functions as a transcriptional activator in the ABA-inducible expression of rd29B. Binds specifically to the ABA-responsive element (ABRE) of the rd29B gene promoter. The sequence is that of ABSCISIC ACID-INSENSITIVE 5-like protein 5 (ABF2) from Arabidopsis thaliana (Mouse-ear cress).